The chain runs to 176 residues: MGKQLKDDFFALFGLPVQYGVDEAALDAAYRTVQSQAHPDRFAKAGDAERRVAMQWAAHANEAYRTLRQPLRRATYLLKLRGVDVQAENNTAMTPAFLMQQMEWREALQEAVEERAVDRLDALLRELRQEKRERHAALGALLDAGDNEAAGGAVRQLMFIEKIEHDTSEAIDRLED.

The J domain occupies 8–80 (DFFALFGLPV…LRRATYLLKL (73 aa)).

This sequence belongs to the HscB family. As to quaternary structure, interacts with HscA and stimulates its ATPase activity.

In terms of biological role, co-chaperone involved in the maturation of iron-sulfur cluster-containing proteins. Seems to help targeting proteins to be folded toward HscA. The chain is Co-chaperone protein HscB homolog from Cupriavidus taiwanensis (strain DSM 17343 / BCRC 17206 / CCUG 44338 / CIP 107171 / LMG 19424 / R1) (Ralstonia taiwanensis (strain LMG 19424)).